The chain runs to 828 residues: Periplasmic nitrate reductase (828 aa).

Positions 1-31 form a signal peptide, tat-type signal; the sequence is MKLSRRSFMKANAVAAAAAAAGLSVPGVARA. The region spanning 39-95 is the 4Fe-4S Mo/W bis-MGD-type domain; it reads IKWDKAPCRFCGTGCGVLVGTQQGRVVACQGDPDAPVNRGLNCIKGYFLPKIMYGKD. The [4Fe-4S] cluster site is built by Cys-46, Cys-49, Cys-53, and Cys-81. Mo-bis(molybdopterin guanine dinucleotide) is bound by residues Lys-83, Gln-150, Asn-175, Cys-179, 212–219, 243–247, 262–264, Met-372, Gln-376, Asn-482, 508–509, Lys-531, Asp-558, and 718–727; these read WGSNMAEM, STFQH, QSD, SD, and TGRVLEHWHT. A substrate-binding site is contributed by Phe-794. Positions 802 and 819 each coordinate Mo-bis(molybdopterin guanine dinucleotide).

It belongs to the prokaryotic molybdopterin-containing oxidoreductase family. NasA/NapA/NarB subfamily. In terms of assembly, component of the periplasmic nitrate reductase NapAB complex composed of NapA and NapB. [4Fe-4S] cluster is required as a cofactor. It depends on Mo-bis(molybdopterin guanine dinucleotide) as a cofactor. Post-translationally, predicted to be exported by the Tat system. The position of the signal peptide cleavage has not been experimentally proven.

The protein resides in the periplasm. The catalysed reaction is 2 Fe(II)-[cytochrome] + nitrate + 2 H(+) = 2 Fe(III)-[cytochrome] + nitrite + H2O. Functionally, catalytic subunit of the periplasmic nitrate reductase complex NapAB. Receives electrons from NapB and catalyzes the reduction of nitrate to nitrite. This Salmonella agona (strain SL483) protein is Periplasmic nitrate reductase.